We begin with the raw amino-acid sequence, 176 residues long: Mitochondrial inner membrane protein Mpv17 (176 aa).

Helical transmembrane passes span 18–38, 53–73, 94–114, and 131–151; these read VQVLTAGSLMGVGDMISQQLV, TMVSLGCGFVGPVVGGWYKVL, GGFAPCFLGCFLPLVGILNGM, and LITNYYLWPAVQLANFYLVPL.

The protein belongs to the peroxisomal membrane protein PXMP2/4 family. In terms of tissue distribution, high levels in heart, kidney, and brain, intermediate levels in testis, and low levels in liver and spleen.

The protein localises to the mitochondrion inner membrane. Non-selective channel that modulates the membrane potential under normal conditions and oxidative stress, and is involved in mitochondrial homeostasis. Involved in mitochondrial deoxynucleoside triphosphates (dNTP) pool homeostasis and mitochondrial DNA (mtDNA) maintenance. May be involved in the regulation of reactive oxygen species metabolism and the control of oxidative phosphorylation. This Mus musculus (Mouse) protein is Mitochondrial inner membrane protein Mpv17.